Reading from the N-terminus, the 255-residue chain is MKAYAKANIFLKLTGFDSRKYHLLESRFILLKDVFDELELVDKESDSKKEFEIISNFKCENNIIQKAYLLLSRRYNNELKELFSKKSLKLTKNIPVCAGLGGGSSDCASFLLLMNETLNLKLNLQELINLSIQLGSDIAFFLSGFNSANVSGCGEIIEEFEDDIPTLKWTFPQISCQTKAVYDEFDREIFDFQKNNNQAQIYKKLSTKELLQNFKNKELNDLFTPCATLYPKMKSYLQEDFFLSGSGSSVFKVDR.

Lys-6 is an active-site residue. 95–105 (PVCAGLGGGSS) contacts ATP. Asp-137 is a catalytic residue.

This sequence belongs to the GHMP kinase family. IspE subfamily.

The catalysed reaction is 4-CDP-2-C-methyl-D-erythritol + ATP = 4-CDP-2-C-methyl-D-erythritol 2-phosphate + ADP + H(+). Its pathway is isoprenoid biosynthesis; isopentenyl diphosphate biosynthesis via DXP pathway; isopentenyl diphosphate from 1-deoxy-D-xylulose 5-phosphate: step 3/6. Functionally, catalyzes the phosphorylation of the position 2 hydroxy group of 4-diphosphocytidyl-2C-methyl-D-erythritol. The polypeptide is 4-diphosphocytidyl-2-C-methyl-D-erythritol kinase (Campylobacter jejuni subsp. doylei (strain ATCC BAA-1458 / RM4099 / 269.97)).